A 790-amino-acid chain; its full sequence is Polyribonucleotide nucleotidyltransferase (790 aa).

Residues aspartate 498 and aspartate 504 each coordinate Mg(2+). Residues 565 to 624 (PRILRIKIKPEQIGEVIGPGGRVIRAIQEQTGTKISIEEDGTVFISAANEDAARRAVREI) enclose the KH domain. The S1 motif domain maps to 634-702 (GEIFYGRVVT…PDGKINLSRK (69 aa)). The segment at 710–790 (AERAATAQAP…KELLGEDEPN (81 aa)) is disordered. A compositionally biased stretch (basic and acidic residues) spans 739–755 (PERRPGPPTPRRPEQRG). A compositionally biased stretch (pro residues) spans 757–772 (SRPPRPQAQRSTPPPG).

It belongs to the polyribonucleotide nucleotidyltransferase family. Requires Mg(2+) as cofactor.

The protein localises to the cytoplasm. It carries out the reaction RNA(n+1) + phosphate = RNA(n) + a ribonucleoside 5'-diphosphate. Its function is as follows. Involved in mRNA degradation. Catalyzes the phosphorolysis of single-stranded polyribonucleotides processively in the 3'- to 5'-direction. This Thermomicrobium roseum (strain ATCC 27502 / DSM 5159 / P-2) protein is Polyribonucleotide nucleotidyltransferase.